A 519-amino-acid chain; its full sequence is Methionine--tRNA ligase (519 aa).

The 'HIGH' region motif lies at 11-21 (AYPNAAPHVGH). The 'KMSKS' region motif lies at 299 to 303 (KMSKS). K302 provides a ligand contact to ATP. The segment at 500-519 (LPPPTGVFPRYQPPQPPEGK) is disordered.

It belongs to the class-I aminoacyl-tRNA synthetase family. MetG type 2B subfamily. Monomer.

It localises to the cytoplasm. The enzyme catalyses tRNA(Met) + L-methionine + ATP = L-methionyl-tRNA(Met) + AMP + diphosphate. Is required not only for elongation of protein synthesis but also for the initiation of all mRNA translation through initiator tRNA(fMet) aminoacylation. The protein is Methionine--tRNA ligase (metG) of Mycobacterium tuberculosis (strain CDC 1551 / Oshkosh).